Consider the following 279-residue polypeptide: Undecaprenyl-diphosphatase (279 aa).

7 helical membrane-spanning segments follow: residues 10-30 (FICFKSIFLGIIQGFTEFLPI), 48-68 (LGVSFSASIQLGSAVAIIYYF), 96-116 (LFLYIFVASIPILVFGLLIKL), 128-148 (GLFSIAITSIVMALLLALSEI), 203-223 (SFLVGIPAVSISGLVELFSLF), 229-249 (IDIIPIIIGIISSFFSSIFAI), and 259-279 (NNTLVFVYYRLAFGIFILTTL).

It belongs to the UppP family.

Its subcellular location is the cell inner membrane. It carries out the reaction di-trans,octa-cis-undecaprenyl diphosphate + H2O = di-trans,octa-cis-undecaprenyl phosphate + phosphate + H(+). Its function is as follows. Catalyzes the dephosphorylation of undecaprenyl diphosphate (UPP). Confers resistance to bacitracin. In Prochlorococcus marinus (strain NATL2A), this protein is Undecaprenyl-diphosphatase.